Here is a 109-residue protein sequence, read N- to C-terminus: Small ribosomal subunit protein eS25 (109 aa).

Basic and acidic residues predominate over residues 1-13; the sequence is MVKKIQESKEKKA. Residues 1-34 are disordered; that stretch reads MVKKIQESKEKKALKAASGTRKDKKKWGDGRKKE.

Belongs to the eukaryotic ribosomal protein eS25 family.

The chain is Small ribosomal subunit protein eS25 (RPS25-1) from Encephalitozoon cuniculi (strain GB-M1) (Microsporidian parasite).